The primary structure comprises 79 residues: uncharacterized protein (79 aa).

Belongs to the asfivirus D79L family.

This is an uncharacterized protein from African swine fever virus (isolate Tick/South Africa/Pretoriuskop Pr4/1996) (ASFV).